Reading from the N-terminus, the 162-residue chain is 2-C-methyl-D-erythritol 2,4-cyclodiphosphate synthase (162 aa).

Residues aspartate 9 and histidine 11 each coordinate a divalent metal cation. 4-CDP-2-C-methyl-D-erythritol 2-phosphate-binding positions include 9-11 (DVH) and 37-38 (HS). Histidine 45 is an a divalent metal cation binding site.

It belongs to the IspF family. In terms of assembly, homotrimer. The cofactor is a divalent metal cation.

The enzyme catalyses 4-CDP-2-C-methyl-D-erythritol 2-phosphate = 2-C-methyl-D-erythritol 2,4-cyclic diphosphate + CMP. It functions in the pathway isoprenoid biosynthesis; isopentenyl diphosphate biosynthesis via DXP pathway; isopentenyl diphosphate from 1-deoxy-D-xylulose 5-phosphate: step 4/6. Involved in the biosynthesis of isopentenyl diphosphate (IPP) and dimethylallyl diphosphate (DMAPP), two major building blocks of isoprenoid compounds. Catalyzes the conversion of 4-diphosphocytidyl-2-C-methyl-D-erythritol 2-phosphate (CDP-ME2P) to 2-C-methyl-D-erythritol 2,4-cyclodiphosphate (ME-CPP) with a corresponding release of cytidine 5-monophosphate (CMP). The sequence is that of 2-C-methyl-D-erythritol 2,4-cyclodiphosphate synthase from Petrotoga mobilis (strain DSM 10674 / SJ95).